A 225-amino-acid chain; its full sequence is Lectin (225 aa).

In terms of assembly, homotetramer.

Its function is as follows. Chitin-binding lectin. Agglutinates rabbit erythrocytes, but not human erythrocytes. The protein is Lectin of Vachellia farnesiana (Sweet acacia).